A 391-amino-acid chain; its full sequence is UPF0328 protein ECU06_1650 (391 aa).

The protein belongs to the UPF0328 family.

This is UPF0328 protein ECU06_1650 from Encephalitozoon cuniculi (strain GB-M1) (Microsporidian parasite).